A 563-amino-acid chain; its full sequence is Lipoprotein LpqB (563 aa).

A signal peptide spans 1–19; it reads MRRMKALTAAMTAALLVSG. Cys20 is lipidated: N-palmitoyl cysteine. Cys20 carries S-diacylglycerol cysteine lipidation.

The protein belongs to the LpqB lipoprotein family.

The protein resides in the cell membrane. In Corynebacterium efficiens (strain DSM 44549 / YS-314 / AJ 12310 / JCM 11189 / NBRC 100395), this protein is Lipoprotein LpqB.